We begin with the raw amino-acid sequence, 147 residues long: MERPLTVLQVSLYHPTQGPVAFAKVPLQLQHDASRLLVGRGQDTHLQLQLPQLSRHHLCLEPYLEKGSNLLAFCLKVLTRQSCVWVNGLPLRYLEQVPLHSVNRISFSGIQMLIRKEGGASLEAFVCYFHLSPSPLIYRPKAQETDE.

The 73-residue stretch at 36–108 folds into the FHA domain; it reads LLVGRGQDTH…LHSVNRISFS (73 aa).

In terms of assembly, interacts with TIFA.

Inhibits TIFA-mediated TRAF6 activation possibly by inducing a conformational change in TIFA. In Rattus norvegicus (Rat), this protein is TRAF-interacting protein with FHA domain-containing protein B.